Here is a 202-residue protein sequence, read N- to C-terminus: MNVLRKIVKKCRDEDTQKPSPVSAPPDDDDLWLPPPEYVPLKELTSKKNMRNFCVNGDVKACSPNGYSFRILRHILRSFNEIYSGNHRMIGLVKVVVGLALSGAPVPEGMNWVYKLRRTLIFQWADSRGPLEGEELEYSQEITWDDDTEFVGLQIRVSARQCHIQGRIWCINTNSRACQLWSDMSLQTQRSEEDKDSSLLLE.

Residues 12-33 form a disordered region; sequence RDEDTQKPSPVSAPPDDDDLWL. Residues 35 to 38 carry the PPXY motif motif; that stretch reads PPEY. The segment at 115 to 151 is essential for glycoprotein binding; it reads KLRRTLIFQWADSRGPLEGEELEYSQEITWDDDTEFV.

The protein belongs to the lyssavirus matrix protein family. Homomultimer. Interacts with nucleoprotein and with the cytoplasmic domain of glycoprotein. Interacts with host ATP6V1A; this interaction plays an important role in virion uncoating after viral entry.

The protein resides in the virion membrane. Its subcellular location is the host endomembrane system. It is found in the host cytoplasm. Plays a major role in assembly, budding and uncoating of virion after membrane fusion. Completely covers the ribonucleoprotein coil and keep it in condensed bullet-shaped form. Inhibits viral transcription and stimulates replication. Plays a major role in early induction of TRAIL-mediated apoptosis in infected neurons. Inhibits the integrated stress response (ISR) in the infected cell by blocking the formation of stress granules. The polypeptide is Matrix protein (M) (Rabies virus (strain PM1503/AVO1) (RABV)).